The primary structure comprises 415 residues: uncharacterized protein (415 aa).

Residues C85, C91, C94, and C175 each coordinate [4Fe-4S] cluster. S-adenosyl-L-methionine contacts are provided by Q248, Y276, E297, and N344. C371 functions as the Nucleophile in the catalytic mechanism.

This sequence belongs to the class I-like SAM-binding methyltransferase superfamily. RNA M5U methyltransferase family.

This is an uncharacterized protein from Leptospira interrogans serogroup Icterohaemorrhagiae serovar Lai (strain 56601).